The sequence spans 370 residues: Actin-related protein 2/3 complex subunit 1A-B (370 aa).

6 WD repeats span residues phenylalanine 6 to cysteine 45, glutamate 50 to threonine 89, proline 140 to lysine 179, serine 202 to glutamine 241, threonine 244 to serine 284, and leucine 322 to glutamine 365.

The protein belongs to the WD repeat ARPC1 family. In terms of assembly, component of the Arp2/3 complex.

The protein localises to the cytoplasm. It localises to the cytoskeleton. The protein resides in the nucleus. Its function is as follows. Probably functions as a component of the Arp2/3 complex which is involved in regulation of actin polymerization and together with an activating nucleation-promoting factor (NPF) mediates the formation of branched actin networks. In addition to its role in the cytoplasmic cytoskeleton, the Arp2/3 complex also promotes actin polymerization in the nucleus, thereby regulating gene transcription and repair of damaged DNA. This chain is Actin-related protein 2/3 complex subunit 1A-B (arpc1a-b), found in Xenopus laevis (African clawed frog).